Here is a 347-residue protein sequence, read N- to C-terminus: Tyrosine recombinase XerC 2 (347 aa).

Residues 17-108 form the Core-binding (CB) domain; that stretch reads LVLTRYMEAH…PLKTWFKWLA (92 aa). Positions 125-313 constitute a Tyr recombinase domain; sequence KLPKHLPRAI…SIEHLRAIHD (189 aa). Active-site residues include arginine 170, lysine 195, histidine 265, arginine 268, and histidine 291. The O-(3'-phospho-DNA)-tyrosine intermediate role is filled by tyrosine 300.

The protein belongs to the 'phage' integrase family.

The protein resides in the cytoplasm. Site-specific tyrosine recombinase, which acts by catalyzing the cutting and rejoining of the recombining DNA molecules. The chain is Tyrosine recombinase XerC 2 from Ralstonia nicotianae (strain ATCC BAA-1114 / GMI1000) (Ralstonia solanacearum).